The following is a 177-amino-acid chain: Large ribosomal subunit protein uL6 (177 aa).

It belongs to the universal ribosomal protein uL6 family. As to quaternary structure, part of the 50S ribosomal subunit.

Functionally, this protein binds to the 23S rRNA, and is important in its secondary structure. It is located near the subunit interface in the base of the L7/L12 stalk, and near the tRNA binding site of the peptidyltransferase center. The protein is Large ribosomal subunit protein uL6 of Psychromonas ingrahamii (strain DSM 17664 / CCUG 51855 / 37).